The chain runs to 446 residues: Ribosomal protein uS12 methylthiotransferase RimO (446 aa).

Positions 10–122 constitute an MTTase N-terminal domain; that stretch reads KTLHMVSLGC…IDELVNEKRS (113 aa). 6 residues coordinate [4Fe-4S] cluster: Cys-19, Cys-53, Cys-85, Cys-154, Cys-158, and Cys-161. One can recognise a Radical SAM core domain in the interval 140 to 369; it reads TGSSYHAYVK…GEIISQTTQE (230 aa). Residues 372-446 form the TRAM domain; it reads ESEVGKTFEV…GDKLLATVIK (75 aa).

The protein belongs to the methylthiotransferase family. RimO subfamily. [4Fe-4S] cluster serves as cofactor.

The protein localises to the cytoplasm. The catalysed reaction is L-aspartate(89)-[ribosomal protein uS12]-hydrogen + (sulfur carrier)-SH + AH2 + 2 S-adenosyl-L-methionine = 3-methylsulfanyl-L-aspartate(89)-[ribosomal protein uS12]-hydrogen + (sulfur carrier)-H + 5'-deoxyadenosine + L-methionine + A + S-adenosyl-L-homocysteine + 2 H(+). In terms of biological role, catalyzes the methylthiolation of an aspartic acid residue of ribosomal protein uS12. The chain is Ribosomal protein uS12 methylthiotransferase RimO from Aliarcobacter butzleri (strain RM4018) (Arcobacter butzleri).